The chain runs to 248 residues: Ribosomal RNA small subunit methyltransferase J (248 aa).

S-adenosyl-L-methionine-binding positions include 101–102 (RD), 117–118 (ER), 153–154 (SS), and Asp171.

This sequence belongs to the methyltransferase superfamily. RsmJ family.

It localises to the cytoplasm. It catalyses the reaction guanosine(1516) in 16S rRNA + S-adenosyl-L-methionine = N(2)-methylguanosine(1516) in 16S rRNA + S-adenosyl-L-homocysteine + H(+). Its function is as follows. Specifically methylates the guanosine in position 1516 of 16S rRNA. The chain is Ribosomal RNA small subunit methyltransferase J from Pectobacterium atrosepticum (strain SCRI 1043 / ATCC BAA-672) (Erwinia carotovora subsp. atroseptica).